The primary structure comprises 540 residues: Flavin-dependent halogenase ptaM (540 aa).

Residues 1 to 21 form the signal peptide; it reads MSVPAQTSVLIVGGGPAGSYA. FAD contacts are provided by Gly-14, Ala-17, and Glu-47. N-linked (GlcNAc...) asparagine glycans are attached at residues Asn-159, Asn-192, Asn-204, and Asn-243. 2 residues coordinate chloride: Ser-330 and Gly-331. N-linked (GlcNAc...) asparagine glycosylation is found at Asn-480, Asn-491, and Asn-523.

Belongs to the flavin-dependent halogenase family.

Its pathway is secondary metabolite biosynthesis. Flavin-dependent halogenase; part of the gene cluster that mediates the biosynthesis of pestheic acid, a diphenyl ether which is a biosynthetic precursor of the unique chloropupukeananes. The biosynthesis initiates from condensation of acetate and malonate units catalyzed by the non-reducing PKS ptaA. As the ptaA protein is TE/CLC domain-deficient, hydrolysis and Claisen cyclization of the polyketide could be catalyzed by ptaB containing a beta-lactamase domain. The ptaB protein might hydrolyze the thioester bond between the ACP of ptaA and the intermediate to release atrochrysone carboxylic acid, which is spontaneously dehydrated to form endocrocin anthrone. Endocrocin anthrone is then converted to endocrocin, catalyzed by the anthrone oxygenase ptaC. Spontaneous decarboxylation of endocrocin occurs to generate emodin. An O-methyltransferase (ptaH or ptaI) could methylate emodin to form physcion. PtaJ could then catalyze the oxidative cleavage of physcion, and rotation of the intermediate could then afford desmethylisosulochrin. PtaF, a putative NADH-dependent oxidoreductase, might also participate in the oxidative cleavage step. Desmethylisosulochrin is then transformed by another O-methyltransferase (ptaH or ptaI) to form isosulochrin. Chlorination of isosulochrin by ptaM in the cyclohexadienone B ring then produces chloroisosulochrin. PtaE is responsible for the oxidative coupling reactions of both benzophenones isosulochrin and chloroisosulochrin to RES-1214-1 and pestheic acid respectively, regardless of chlorination. This is Flavin-dependent halogenase ptaM from Pestalotiopsis fici (strain W106-1 / CGMCC3.15140).